We begin with the raw amino-acid sequence, 525 residues long: GMP synthase [glutamine-hydrolyzing] (525 aa).

Residues 16 to 205 (PVLVVDFGAQ…LHDFAGIGAR (190 aa)) enclose the Glutamine amidotransferase type-1 domain. The Nucleophile role is filled by cysteine 93. Catalysis depends on residues histidine 179 and glutamate 181. In terms of domain architecture, GMPS ATP-PPase spans 206–399 (WTPANIANAL…LGLPEEIVAR (194 aa)). 233–239 (SGGVDSA) contacts ATP.

In terms of assembly, homodimer.

The enzyme catalyses XMP + L-glutamine + ATP + H2O = GMP + L-glutamate + AMP + diphosphate + 2 H(+). It participates in purine metabolism; GMP biosynthesis; GMP from XMP (L-Gln route): step 1/1. Its function is as follows. Catalyzes the synthesis of GMP from XMP. The protein is GMP synthase [glutamine-hydrolyzing] of Mycobacterium marinum (strain ATCC BAA-535 / M).